The primary structure comprises 690 residues: Elongation factor G (690 aa).

The region spanning 8 to 283 is the tr-type G domain; it reads EDYRNFGIMA…AVVDYLPSPV (276 aa). Residues 17 to 24, 81 to 85, and 135 to 138 each bind GTP; these read AHIDAGKT, DTPGH, and NKMD.

Belongs to the TRAFAC class translation factor GTPase superfamily. Classic translation factor GTPase family. EF-G/EF-2 subfamily.

The protein resides in the cytoplasm. Catalyzes the GTP-dependent ribosomal translocation step during translation elongation. During this step, the ribosome changes from the pre-translocational (PRE) to the post-translocational (POST) state as the newly formed A-site-bound peptidyl-tRNA and P-site-bound deacylated tRNA move to the P and E sites, respectively. Catalyzes the coordinated movement of the two tRNA molecules, the mRNA and conformational changes in the ribosome. The protein is Elongation factor G of Rhodopseudomonas palustris (strain HaA2).